The primary structure comprises 1315 residues: Chaoptin (1315 aa).

Residues methionine 1–alanine 29 form the signal peptide. Asparagine 77 carries an N-linked (GlcNAc...) (high mannose) asparagine; alternate glycan. Asparagine 77 carries N-linked (GlcNAc...) (paucimannose) asparagine; alternate glycosylation. LRR repeat units lie at residues lysine 80 to serine 101, glycine 103 to glycine 124, serine 128 to histidine 149, lysine 152 to glycine 173, serine 177 to glycine 198, isoleucine 201 to aspartate 222, arginine 226 to proline 247, serine 250 to glutamate 271, and asparagine 279 to tyrosine 300. N-linked (GlcNAc...) (paucimannose) asparagine; alternate glycosylation is present at asparagine 267. Asparagine 267 carries an N-linked (GlcNAc...) (complex) asparagine; alternate glycan. N-linked (GlcNAc...) (high mannose) asparagine; alternate glycosylation is present at asparagine 305. Asparagine 305 carries N-linked (GlcNAc...) (paucimannose) asparagine; alternate glycosylation. 27 LRR repeats span residues arginine 326–serine 347, serine 351–asparagine 372, valine 375–asparagine 396, threonine 401–threonine 424, glycine 477–glutamate 498, serine 527–phenylalanine 548, asparagine 551–glycine 572, lysine 577–aspartate 598, alanine 601–asparagine 622, glutamate 625–asparagine 646, lysine 649–glutamine 670, asparagine 676–serine 696, asparagine 708–proline 729, serine 733–asparagine 754, histidine 757–asparagine 778, glutamine 781–proline 802, glycine 805–asparagine 826, glycine 828–serine 849, threonine 854–asparagine 875, serine 879–threonine 900, lysine 903–glycine 924, serine 928–lysine 948, tyrosine 949–asparagine 970, asparagine 973–leucine 994, histidine 996–glycine 1017, aspartate 1021–proline 1044, and histidine 1045–leucine 1066. The N-linked (GlcNAc...) (high mannose) asparagine glycan is linked to asparagine 361. Residue asparagine 422 is glycosylated (N-linked (GlcNAc...) asparagine). N-linked (GlcNAc...) (high mannose) asparagine glycosylation occurs at asparagine 680. Residue asparagine 692 is glycosylated (N-linked (GlcNAc...) (high mannose) asparagine; alternate). N-linked (GlcNAc...) (paucimannose) asparagine; alternate glycosylation occurs at asparagine 692. A glycan (N-linked (GlcNAc...) (high mannose) asparagine) is linked at asparagine 718. Residue asparagine 746 is glycosylated (N-linked (GlcNAc...) asparagine). A glycan (N-linked (GlcNAc...) (high mannose) asparagine) is linked at asparagine 936. A glycan (N-linked (GlcNAc...) (paucimannose) asparagine) is linked at asparagine 970. N-linked (GlcNAc...) (complex) asparagine glycosylation is present at asparagine 1012. 3 N-linked (GlcNAc...) (high mannose) asparagine glycosylation sites follow: asparagine 1122, asparagine 1152, and asparagine 1171. An LRRCT domain is found at threonine 1211–asparagine 1274.

Belongs to the chaoptin family. Expressed in photoreceptor cells and their axons in the adult retina, the ocellus and larval photoreceptor organ.

The protein resides in the cell membrane. Required for photoreceptor cell morphogenesis. Mediates homophilic cellular adhesion. This Drosophila melanogaster (Fruit fly) protein is Chaoptin (chp).